The sequence spans 234 residues: MLTRKQHELLMFIHERIKETGVSPSFDEMKEALDLASKSGIHRLITALEERGFIRRLAHRARALEVVKLPQQATAAAPPKGRGAFRPQVFEGGGAPPPAASPAAAANDSRELPILGRIAAGTPIDAIQHERERLPVPEAMLGAGEHYVLEVQGDSMIEAGILDGDYVIIKKGDTATSGEIVVALVGEEATLKRLRKKGGSIALEAANPKYETRIFGPDQVEVQGKLVGLIRRYH.

A DNA-binding region (H-T-H motif) is located at residues 26 to 46 (FDEMKEALDLASKSGIHRLIT). The disordered stretch occupies residues 73–107 (ATAAAPPKGRGAFRPQVFEGGGAPPPAASPAAAAN). Residues Ser-155 and Lys-192 each act as for autocatalytic cleavage activity in the active site.

Belongs to the peptidase S24 family. As to quaternary structure, homodimer.

The catalysed reaction is Hydrolysis of Ala-|-Gly bond in repressor LexA.. In terms of biological role, represses a number of genes involved in the response to DNA damage (SOS response), including recA and lexA. In the presence of single-stranded DNA, RecA interacts with LexA causing an autocatalytic cleavage which disrupts the DNA-binding part of LexA, leading to derepression of the SOS regulon and eventually DNA repair. The chain is LexA repressor from Caulobacter vibrioides (strain ATCC 19089 / CIP 103742 / CB 15) (Caulobacter crescentus).